A 199-amino-acid polypeptide reads, in one-letter code: Puromycin N-acetyltransferase (199 aa).

Residues 6 to 198 enclose the N-acetyltransferase domain; that stretch reads PTVRLATRDD…RTWCMTRKPG (193 aa).

In terms of biological role, detoxification of puromycin. The sequence is that of Puromycin N-acetyltransferase (pac) from Streptomyces alboniger.